A 2069-amino-acid polypeptide reads, in one-letter code: MSQPPLLPASAETRKFTRALSKPGTAAELRQSVSEVVRGSVLLAKPKLIEPLDYENVIVQKKTQILNDCLREMLLFPYDDFQTAILRRQGRYICSTVPAKAEEEAQSLFVTECIKTYNSDWHLVNYKYEDYSGEFRQLPNKVVKLDKLPVHVYEVDEEVDKDEDAASLGSQKGGITKHGWLYKGNMNSAISVTMRSFKRRFFHLIQLGDGSYNLNFYKDEKISKEPKGSIFLDSCMGVVQNNKVRRFAFELKMQDKSSYLLAADSEVEMEEWITILNKILQLNFEAAMQEKRNGDSHEDDEQSKLEGSGSGLDSYLPELAKSAREAEIKLKSESRVKLFYLDPDAQKLDFSSAEPEVKSFEEKFGKRILVKCNDLSFNLQCCVAENEEGPTTNVEPFFVTLSLFDIKYNRKISADFHVDLNHFSVRQMLATTSPALMNGSGQSPSVLKGILHEAAMQYPKQGIFSVTCPHPDIFLVARIEKVLQGSITHCAEPYMKSSDSSKVAQKVLKNAKQACQRLGQYRMPFAWAARTLFKDASGNLDKNARFSAIYRQDSNKLSNDDMLKLLADFRKPEKMAKLPVILGNLDITIDNVSSDFPNYVNSSYIPTKQFETCSKTPITFEVEEFVPCIPKHTQPYTIYTNHLYVYPKYLKYDSQKSFAKARNIAICIEFKDSDEEDSQPLKCIYGRPGGPVFTRSAFAAVLHHHQNPEFYDEIKIELPTQLHEKHHLLLTFFHVSCDNSSKGSTKKRDVVETQVGYSWLPLLKDGRVVTSEQHIPVSANLPSGYLGYQELGMGRHYGPEIKWVDGGKPLLKISTHLVSTVYTQDQHLHNFFQYCQKTESGAQALGNELVKYLKSLHAMEGHVMIAFLPTILNQLFRVLTRATQEEVAVNVTRVIIHVVAQCHEEGLESHLRSYVKYAYKAEPYVASEYKTVHEELTKSMTTILKPSADFLTSNKLLKYSWFFFDVLIKSMAQHLIENSKVKLLRNQRFPASYHHAVETVVNMLMPHITQKFRDNPEASKNANHSLAVFIKRCFTFMDRGFVFKQINNYISCFAPGDPKTLFEYKFEFLRVVCNHEHYIPLNLPMPFGKGRIQRYQDLQLDYSLTDEFCRNHFLVGLLLREVGTALQEFREVRLIAISVLKNLLIKHSFDDRYASRSHQARIATLYLPLFGLLIENVQRINVRDVSPFPVNAGMTVKDESLALPAVNPLVTPQKGSTLDNSLHKDLLGAISGIASPYTTSTPNINSVRNADSRGSLISTDSGNSLPERNSEKSNSLDKHQQSSTLGNSVVRCDKLDQSEIKSLLMCFLYILKSMSDDALFTYWNKASTSELMDFFTISEVCLHQFQYMGKRYIARTGMMHARLQQLGSLDNSLTFNHSYGHSDADVLHQSLLEANIATEVCLTALDTLSLFTLAFKNQLLADHGHNPLMKKVFDVYLCFLQKHQSETALKNVFTALRSLIYKFPSTFYEGRADMCAALCYEILKCCNSKLSSIRTEASQLLYFLMRNNFDYTGKKSFVRTHLQVIISVSQLIADVVGIGGTRFQQSLSIINNCANSDRLIKHTSFSSDVKDLTKRIRTVLMATAQMKEHENDPEMLVDLQYSLAKSYASTPELRKTWLDSMARIHVKNGDLSEAAMCYVHVTALVAEYLTRKEAVQWEPPLLPHSHSACLRRSRGGVFRQGCTAFRVITPNIDEEASMMEDVGMQDVHFNEDVLMELLEQCADGLWKAERYELIADIYKLIIPIYEKRRDFERLAHLYDTLHRAYSKVTEVMHSGRRLLGTYFRVAFFGQAAQYQFTDSETDVEGFFEDEDGKEYIYKEPKLTPLSEISQRLLKLYSDKFGSENVKMIQDSGKVNPKDLDSKYAYIQVTHVIPFFDEKELQERKTEFERSHNIRRFMFEMPFTQTGKRQGGVEEQCKRRTILTAIHCFPYVKKRIPVMYQHHTDLNPIEVAIDEMSKKVAELRQLCSSAEVDMIKLQLKLQGSVSVQVNAGPLAYARAFLDDTNTKRYPDNKVKLLKEVFRQFVEACGQALAVNERLIKEDQLEYQEEMKANYREMAKELSEIMHEQLG.

Serine 21, serine 32, serine 167, and serine 170 each carry phosphoserine. In terms of domain architecture, PH spans 174 to 281 (GITKHGWLYK…WITILNKILQ (108 aa)). The disordered stretch occupies residues 290 to 313 (EKRNGDSHEDDEQSKLEGSGSGLD). 2 positions are modified to phosphoserine: serine 433 and serine 443. Positions 640 to 818 (TNHLYVYPKY…PLLKISTHLV (179 aa)) constitute a C2 DOCK-type domain. Phosphoserine is present on residues serine 927 and serine 1235. Threonine 1241 carries the phosphothreonine modification. The tract at residues 1241-1282 (TPNINSVRNADSRGSLISTDSGNSLPERNSEKSNSLDKHQQS) is disordered. A phosphoserine mark is found at serine 1255, serine 1261, and serine 1264. Over residues 1255-1267 (SLISTDSGNSLPE) the composition is skewed to polar residues. The segment covering 1268–1280 (RNSEKSNSLDKHQ) has biased composition (basic and acidic residues). One can recognise a DOCKER domain in the interval 1605–2069 (KSYASTPELR…LSEIMHEQLG (465 aa)). The segment at 1693-2069 (DEEASMMEDV…LSEIMHEQLG (377 aa)) is interaction with CDC42. 2 coiled-coil regions span residues 1948-1982 (IEVAIDEMSKKVAELRQLCSSAEVDMIKLQLKLQG) and 2034-2067 (NERLIKEDQLEYQEEMKANYREMAKELSEIMHEQ).

This sequence belongs to the DOCK family. Homodimer. Interacts preferentially with nucleotide-depleted CDC42. In terms of tissue distribution, widely expressed, with highest expression in heart and placenta. Expressed at intermediate level in kidney, brain, lung and skeletal muscle.

It is found in the endomembrane system. Its function is as follows. Guanine nucleotide-exchange factor (GEF) that activates CDC42 by exchanging bound GDP for free GTP. Overexpression induces filopodia formation. This chain is Dedicator of cytokinesis protein 9, found in Homo sapiens (Human).